Consider the following 393-residue polypeptide: tRNA(Met) cytidine acetate ligase (393 aa).

ATP-binding residues include G81, N142, and R167.

This sequence belongs to the TmcAL family.

It is found in the cytoplasm. The enzyme catalyses cytidine(34) in elongator tRNA(Met) + acetate + ATP = N(4)-acetylcytidine(34) in elongator tRNA(Met) + AMP + diphosphate. Its function is as follows. Catalyzes the formation of N(4)-acetylcytidine (ac(4)C) at the wobble position of elongator tRNA(Met), using acetate and ATP as substrates. First activates an acetate ion to form acetyladenylate (Ac-AMP) and then transfers the acetyl group to tRNA to form ac(4)C34. This is tRNA(Met) cytidine acetate ligase from Bacillus cereus (strain AH820).